The primary structure comprises 115 residues: Nucleoid-associated protein NATL1_00191 (115 aa).

Positions 89 to 115 are disordered; that stretch reads STSTMKERMEDLTGGFKLNLPGMGEES.

The protein belongs to the YbaB/EbfC family. In terms of assembly, homodimer.

It is found in the cytoplasm. The protein resides in the nucleoid. Binds to DNA and alters its conformation. May be involved in regulation of gene expression, nucleoid organization and DNA protection. This chain is Nucleoid-associated protein NATL1_00191, found in Prochlorococcus marinus (strain NATL1A).